Consider the following 255-residue polypeptide: Cytosolic Fe-S cluster assembly factor Nubp2 homolog (255 aa).

An ATP-binding site is contributed by 14–21 (GKGGVGKS). C185 and C188 together coordinate [4Fe-4S] cluster.

The protein belongs to the Mrp/NBP35 ATP-binding proteins family. NUBP2/CFD1 subfamily. Heterotetramer of 2 Nubp1 and 2 Nubp2 chains. [4Fe-4S] cluster is required as a cofactor.

Its subcellular location is the cytoplasm. Component of the cytosolic iron-sulfur (Fe/S) protein assembly (CIA) machinery. Required for maturation of extramitochondrial Fe-S proteins. The Nubp1-Nubp2 heterotetramer forms a Fe-S scaffold complex, mediating the de novo assembly of an Fe-S cluster and its transfer to target apoproteins. This Drosophila persimilis (Fruit fly) protein is Cytosolic Fe-S cluster assembly factor Nubp2 homolog.